Consider the following 61-residue polypeptide: MANTSKVVKAARGHKFAVQNYSRCSRCGRARGYYRFFGMCRICIREMAHKGELPGVKKSSW.

Residues cysteine 24, cysteine 27, cysteine 40, and cysteine 43 each coordinate Zn(2+).

It belongs to the universal ribosomal protein uS14 family. Zinc-binding uS14 subfamily. In terms of assembly, part of the 30S ribosomal subunit. Contacts proteins S3 and S10. Zn(2+) is required as a cofactor.

Binds 16S rRNA, required for the assembly of 30S particles and may also be responsible for determining the conformation of the 16S rRNA at the A site. This chain is Small ribosomal subunit protein uS14, found in Deinococcus deserti (strain DSM 17065 / CIP 109153 / LMG 22923 / VCD115).